The chain runs to 122 residues: Large ribosomal subunit protein uL14c (122 aa).

This sequence belongs to the universal ribosomal protein uL14 family. Part of the 50S ribosomal subunit.

It localises to the plastid. It is found in the chloroplast. Functionally, binds to 23S rRNA. This is Large ribosomal subunit protein uL14c from Morus indica (Mulberry).